The chain runs to 152 residues: Actin-related protein 2/3 complex subunit 5-B (152 aa).

The interval 21 to 44 (NKFVDDQLQEEPAEPQGPDEAEVD) is disordered. Residues 27-43 (QLQEEPAEPQGPDEAEV) are compositionally biased toward acidic residues.

This sequence belongs to the ARPC5 family. In terms of assembly, component of the Arp2/3 complex composed of actr2/arp2, actr3/arp3, arpc1 (arpc1a or arpc1b), arpc2, arpc3, arpc4 and arpc5.

It is found in the cytoplasm. It localises to the cytoskeleton. The protein resides in the cell projection. The protein localises to the nucleus. Component of the Arp2/3 complex, a multiprotein complex that mediates actin polymerization upon stimulation by nucleation-promoting factor (NPF). The Arp2/3 complex mediates the formation of branched actin networks in the cytoplasm, providing the force for cell motility. In addition to its role in the cytoplasmic cytoskeleton, the Arp2/3 complex also promotes actin polymerization in the nucleus, thereby regulating gene transcription and repair of damaged DNA. The Arp2/3 complex promotes homologous recombination (HR) repair in response to DNA damage by promoting nuclear actin polymerization, leading to drive motility of double-strand breaks (DSBs). In Xenopus laevis (African clawed frog), this protein is Actin-related protein 2/3 complex subunit 5-B (arpc5-b).